We begin with the raw amino-acid sequence, 446 residues long: Tryptophan dimethylallyltransferase (446 aa).

L-tryptophan is bound by residues 83–84 and Glu-92; that span reads IL. Substrate contacts are provided by Arg-103, Lys-189, and Tyr-191. 2 residues coordinate L-tryptophan: Tyr-193 and Arg-246. Substrate-binding residues include Arg-259, Lys-261, Tyr-263, Gln-345, and Tyr-347.

The protein belongs to the tryptophan dimethylallyltransferase family. As to quaternary structure, homodimer.

The enzyme catalyses L-tryptophan + dimethylallyl diphosphate = 4-(3-methylbut-2-enyl)-L-tryptophan + diphosphate. It functions in the pathway alkaloid biosynthesis; ergot alkaloid biosynthesis. Its function is as follows. Tryptophan dimethylallyltransferase; part of the gene cluster that mediates the biosynthesis of fungal ergot alkaloid. DmaW catalyzes the first step of ergot alkaloid biosynthesis by condensing dimethylallyl diphosphate (DMAP) and tryptophan to form 4-dimethylallyl-L-tryptophan. The second step is catalyzed by the methyltransferase easF that methylates 4-dimethylallyl-L-tryptophan in the presence of S-adenosyl-L-methionine, resulting in the formation of 4-dimethylallyl-L-abrine. The catalase easC and the FAD-dependent oxidoreductase easE then transform 4-dimethylallyl-L-abrine to chanoclavine-I which is further oxidized by easD in the presence of NAD(+), resulting in the formation of chanoclavine-I aldehyde. Chanoclavine-I aldehyde is the precursor of ergoamides and ergopeptines in Clavicipitaceae, and clavine-type alcaloids such as fumiclavine in Trichocomaceae. However, the metabolites downstream of chanoclavine-I aldehyde in Arthrodermataceae have not been identified yet. This is Tryptophan dimethylallyltransferase from Arthroderma otae (strain ATCC MYA-4605 / CBS 113480) (Microsporum canis).